The primary structure comprises 1354 residues: RNA-directed RNA polymerase VP1 (1354 aa).

It carries out the reaction RNA(n) + a ribonucleoside 5'-triphosphate = RNA(n+1) + diphosphate. RNA-directed RNA polymerase that is involved in transcription and genome replication. Following infection, it catalyzes the synthesis of fully conservative plus strands. After core assembly, which consists in recruitment of one capped plus-strand for each genomic segments and polymerase complexes, the polymerase switches mode and catalyzes the synthesis of complementary minus-strands. The chain is RNA-directed RNA polymerase VP1 from Cryphonectria parasitica mycoreovirus 1 (strain 9B21) (CpMYRV-1).